The primary structure comprises 848 residues: Heat shock protein 70 homolog lhs1 (848 aa).

A signal peptide spans 1-21; the sequence is MKRSVLTIILFFSCQFWHAFA. Asn134, Asn247, Asn359, Asn457, Asn462, Asn488, Asn555, Asn632, Asn678, Asn733, and Asn817 each carry an N-linked (GlcNAc...) asparagine glycan. A disordered region spans residues 784–848; sequence KLKAKKGASS…QQEIDDSDEL (65 aa). Composition is skewed to polar residues over residues 807-822 and 829-840; these read TNDI…TSTQ and ASVTQRPSSLQQ. Positions 845–848 match the Prevents secretion from ER motif; the sequence is SDEL.

This sequence belongs to the heat shock protein 70 family.

The protein resides in the endoplasmic reticulum lumen. It catalyses the reaction ATP + H2O = ADP + phosphate + H(+). Its function is as follows. Chaperone required for protein translocation and folding in the endoplasmic reticulum. The chain is Heat shock protein 70 homolog lhs1 from Schizosaccharomyces pombe (strain 972 / ATCC 24843) (Fission yeast).